Here is a 156-residue protein sequence, read N- to C-terminus: Probable cyclic pyranopterin monophosphate synthase (156 aa).

Substrate-binding positions include 74–76 and 110–111; these read LCH and ME. Aspartate 125 is a catalytic residue.

The protein belongs to the MoaC family. Homohexamer; trimer of dimers.

The catalysed reaction is (8S)-3',8-cyclo-7,8-dihydroguanosine 5'-triphosphate = cyclic pyranopterin phosphate + diphosphate. The protein operates within cofactor biosynthesis; molybdopterin biosynthesis. Its function is as follows. Catalyzes the conversion of (8S)-3',8-cyclo-7,8-dihydroguanosine 5'-triphosphate to cyclic pyranopterin monophosphate (cPMP). This is Probable cyclic pyranopterin monophosphate synthase from Thermococcus kodakarensis (strain ATCC BAA-918 / JCM 12380 / KOD1) (Pyrococcus kodakaraensis (strain KOD1)).